Here is a 962-residue protein sequence, read N- to C-terminus: Glutamate receptor 1 (962 aa).

Residues 1–25 (MFSSFSFLNMFGVLFTVFNLTVVQP) form the signal peptide. The Extracellular segment spans residues 26–591 (YPSHIIIKSF…SVFSFMQPLS (566 aa)). N-linked (GlcNAc...) asparagine glycans are attached at residues Asn190, Asn220, Asn275, Asn333, Asn441, and Asn482. The chain crosses the membrane as a helical span at residues 592–612 (TEIWMYIIFAYIGVSVVIFLV). At 613–668 (SRFSPYEWRVEETSRGGFTISNDFSVYNCLWFTLAAFMQQGTDILPRSISGRIASS) the chain is on the cytoplasmic side. The helical transmembrane segment at 669 to 689 (AWWFFTMIIVSSYTANLAAFL) threads the bilayer. The Extracellular segment spans residues 690 to 855 (TLEKMQAPIE…GSSASLNLSK (166 aa)). Asn852 carries an N-linked (GlcNAc...) asparagine glycan. A helical membrane pass occupies residues 856–876 (VAGIFYILMGGMVISMLAALG). At 877–962 (EFLYRSRIEA…PANTLYNTAV (86 aa)) the chain is on the cytoplasmic side.

Belongs to the glutamate-gated ion channel (TC 1.A.10.1) family. As to quaternary structure, interacts with sol-1. Interacts with cni-1; the interaction negatively regulates export of glr-1 from the endoplasmic reticulum to synapses. Interacts with usp-46; the interaction results in deubiquitination of glr-1. Post-translationally, ubiquitinated. Deubiquitinated by usp-46 which prevents its degradation. Glycosylated. As to expression, command interneurons of the locomotory control circuit (AIB, AVA, AVB, AVD, AVE and PVC) and motor neurons (RMD, RIM, SMD, AVG, PVQ and URY).

It is found in the postsynaptic cell membrane. It localises to the endoplasmic reticulum. Its subcellular location is the synapse. The protein localises to the cell membrane. The protein resides in the recycling endosome. It is found in the cell projection. It localises to the dendrite. Its subcellular location is the perikaryon. Non-NMDA (N-methyl-D-aspartate) ionotropic glutamate receptor. L-glutamate acts as an excitatory neurotransmitter at many synapses in the central nervous system. The postsynaptic actions of glutamate are mediated by a variety of receptors that are named according to their selective agonists. May contribute to a sensory discrimination between mechanical and chemical stimuli. Plays a role in controlling movement in response to environmental cues such as food availability and mechanosensory stimulation such as the nose touch response. In AIB interneurons, promotes omega turns, a movement that frequently follows backwards locomotion or 'reversals' in response to environmental cues while possibly playing an inhibitory role in alternative neurons to inhibit omega turns. This is Glutamate receptor 1 from Caenorhabditis elegans.